The primary structure comprises 368 residues: Phospho-N-acetylmuramoyl-pentapeptide-transferase (368 aa).

The next 9 membrane-spanning stretches (helical) occupy residues 23 to 43 (YLTFRASAAAITALLIIIFAG), 72 to 92 (VPTMGGLMIIFAIEVSAFLWA), 98 to 118 (HVWLIMLAVFWMGLIGFIDDY), 139 to 159 (VTLGLVIGFYTWNDPVFSVLL), 170 to 190 (LSVDYGIFYIPVVIFIITAVS), 201 to 221 (GLAAGNAAIVTFALGVFAYLC), 238 to 258 (AGEVAVVSMAIVMACVGFLWF), 281 to 301 (VIALMIKQELLLPVLAGVFFV), and 345 to 365 (KIVIRFWIISILLFLTSLMTL).

This sequence belongs to the glycosyltransferase 4 family. MraY subfamily. Mg(2+) is required as a cofactor.

It localises to the cell inner membrane. It catalyses the reaction UDP-N-acetyl-alpha-D-muramoyl-L-alanyl-gamma-D-glutamyl-meso-2,6-diaminopimeloyl-D-alanyl-D-alanine + di-trans,octa-cis-undecaprenyl phosphate = di-trans,octa-cis-undecaprenyl diphospho-N-acetyl-alpha-D-muramoyl-L-alanyl-D-glutamyl-meso-2,6-diaminopimeloyl-D-alanyl-D-alanine + UMP. The protein operates within cell wall biogenesis; peptidoglycan biosynthesis. Catalyzes the initial step of the lipid cycle reactions in the biosynthesis of the cell wall peptidoglycan: transfers peptidoglycan precursor phospho-MurNAc-pentapeptide from UDP-MurNAc-pentapeptide onto the lipid carrier undecaprenyl phosphate, yielding undecaprenyl-pyrophosphoryl-MurNAc-pentapeptide, known as lipid I. The polypeptide is Phospho-N-acetylmuramoyl-pentapeptide-transferase (Chlorobaculum tepidum (strain ATCC 49652 / DSM 12025 / NBRC 103806 / TLS) (Chlorobium tepidum)).